Here is a 1209-residue protein sequence, read N- to C-terminus: 3',5'-cyclic-AMP phosphodiesterase, isoform I (1209 aa).

7 disordered regions span residues Asn16–Thr35, Gly59–Ser82, Leu275–Pro353, Ser372–Ile403, Glu442–Glu498, Val626–Gly655, and Ser754–Thr792. Gly residues-rich tracts occupy residues Ser25–Thr35 and Gly59–Ser77. A compositionally biased stretch (polar residues) spans Leu275–Val290. The segment covering Gln291–Gln314 has biased composition (low complexity). Residues Arg315–Pro324 show a composition bias toward polar residues. Residues Ser372–Pro383 are compositionally biased toward low complexity. A compositionally biased stretch (polar residues) spans Gly385–Ser400. Low complexity-rich tracts occupy residues Ala445–Ser462 and Thr472–His483. Polar residues-rich tracts occupy residues Pro484–Glu498 and Pro627–Gly645. The region spanning Val795–Ser1124 is the PDEase domain. The active-site Proton donor is the His871. His871–His875 is a binding site for 3',5'-cyclic AMP. A divalent metal cation contacts are provided by His875, His911, Asp912, and Asp1029. Positions 912, 1029, and 1080 each coordinate 3',5'-cyclic AMP. The span at Glu1146 to Gly1163 shows a compositional bias: acidic residues. The tract at residues Glu1146–Met1209 is disordered. Positions Gly1164–Ser1181 are enriched in low complexity. Gly residues predominate over residues Gly1182–Met1193. Residues Gly1199–Met1209 show a composition bias toward polar residues.

This sequence belongs to the cyclic nucleotide phosphodiesterase family. PDE4 subfamily. Monomer. The cofactor is a divalent metal cation.

The catalysed reaction is 3',5'-cyclic AMP + H2O = AMP + H(+). It functions in the pathway purine metabolism; 3',5'-cyclic AMP degradation; AMP from 3',5'-cyclic AMP: step 1/1. Its function is as follows. Hydrolyzes the second messenger cAMP, which is a key regulator of many important physiological processes. Vital for female fertility. Required for learning/memory. This is 3',5'-cyclic-AMP phosphodiesterase, isoform I from Drosophila melanogaster (Fruit fly).